We begin with the raw amino-acid sequence, 1077 residues long: Zinc finger protein 518B (1077 aa).

The segment covering 9-30 (YTTQVNGGPSSLTMSPKQPNRA) has biased composition (polar residues). Residues 9-35 (YTTQVNGGPSSLTMSPKQPNRATRTER) are disordered. C2H2-type zinc fingers lie at residues 160–182 (FICS…LVKH) and 188–211 (YRCE…RRVH). The disordered stretch occupies residues 372-397 (TSRGDGGTSECLSTEKGSGGQKKMLS). K479 is covalently cross-linked (Glycyl lysine isopeptide (Lys-Gly) (interchain with G-Cter in SUMO2)). Disordered stretches follow at residues 561–585 (LVSS…GQVS), 599–622 (GEDK…ETAG), 675–739 (KPSS…GSRQ), and 825–852 (QPLT…RKED). The segment covering 564 to 574 (SDRKLEDKQME) has biased composition (basic and acidic residues). 2 stretches are compositionally biased toward polar residues: residues 605–621 (SQQP…SETA) and 675–688 (KPSS…QRRS). Glycyl lysine isopeptide (Lys-Gly) (interchain with G-Cter in SUMO2) cross-links involve residues K847 and K861. Residues 895–914 (QVNSTKKKNKMQANPGRYFK) are disordered. Residues 1039 to 1061 (FKCWFCGRLYEDQEEWMSHGQRH) form a C2H2-type 3 zinc finger.

It belongs to the krueppel C2H2-type zinc-finger protein family.

Its subcellular location is the nucleus. In terms of biological role, through its association with the EHMT1-EHMT2/G9A and PRC2/EED-EZH2 histone methyltransferase complexes may function in gene silencing, regulating repressive post-translational methylation of histone tails at promoters of target genes. In Mus musculus (Mouse), this protein is Zinc finger protein 518B (Znf518b).